An 894-amino-acid polypeptide reads, in one-letter code: MGLDVDSVPIAEAAAPSSMAATEPPADKIAQLDRDASNVAPMNTDSSRETMPTSPRALEPAQVTPLSSDVAYEGLVQGKDPSDDSIIAATPLQRTFSTVAPTMTTQPNRLQLIDEDQQFHGAEFNDHLKQWGLSDAGFGYDICAVLGSQSTGKSTLLNRLFGTNFDVMDERARQQTTKGIWLCRGMDRNVLVMDVEGTDGRERGEDQDFERKSALFSLATAECLIVNMWENQVGLFQGANMALLKTVLDVNLSLFQAGRARAGSAKEKTLLLFVIRDFIGTTPLANLEATIRTDLQRIWASLTKPESLVHAELGDFFDLGFATLPHKVLQAKEFDADILKLQRRFIDRGDESYVFKTEYHKRIPIDGLPHYLEGVWEQIVQNKDLDLPTQQELLAQFRCDEIATTASLAFSSAMSALRAELDAGHVLESLGNDMARHRSEALAMFDKDASRYHQVVYARKREDLLVKLNAALLPFFLCQLKNLHNELTDQCKRVIQEGTKQPAYNFGLLVEEGITKAMRAFDDETARLVLPETDWKVDDERAQLLDELHTLARTLRANETRKLSIQLEKDMRRELADPVELALSQPDISMWNNVLSAFHRVNEQVANMYRTRAASLNTTPDEDTTAVAQLQQASWRLLLEKVHEQTSETVLASRLRGYFEDRFRYDAGGVPRVWKPSDDIDDIFVKSRDATLALIPLYATIQPDDPSLQMSVVSLVGAPEESLETPSYDEARHVLSERKCAEIGQRFRREADAAYIEAKRGTVSSMSQVPIWMYGVLVVLGWNEAMAVLRNPVYFTLLCMVLATAYVIWRLNLGTPVLALASGMTRELRAFGEEQLRTYLDGTPPSANRAREYRVPSGSTAHVSEKTPHRPLTTSGAAEADTVEDSHPRLPASF.

Residues Met1–Thr64 are disordered. The Cytoplasmic segment spans residues Met1 to Gln768. The segment covering Pro9–Pro24 has biased composition (low complexity). Residues Ala40 to Thr53 are compositionally biased toward polar residues. A GB1/RHD3-type G domain is found at Gly137–Tyr359. Residue Gly147–Ser154 coordinates GTP. Residues Lys536–Glu559 adopt a coiled-coil conformation. Residues Val769–Leu789 form a helical membrane-spanning segment. Residues Arg790 to Pro792 are Lumenal-facing. The chain crosses the membrane as a helical span at residues Val793–Leu813. At Gly814–Phe894 the chain is on the cytoplasmic side. The disordered stretch occupies residues Asp841–Phe894.

This sequence belongs to the TRAFAC class dynamin-like GTPase superfamily. GB1/RHD3 GTPase family. RHD3 subfamily.

The protein localises to the endoplasmic reticulum membrane. Functionally, cooperates with the reticulon proteins and tubule-shaping DP1 family proteins to generate and maintain the structure of the tubular endoplasmic reticulum network. Has GTPase activity, which is required for its function in ER organization. The polypeptide is Protein SEY1 (Malassezia globosa (strain ATCC MYA-4612 / CBS 7966) (Dandruff-associated fungus)).